We begin with the raw amino-acid sequence, 347 residues long: DNA-directed RNA polymerase subunit alpha (347 aa).

An alpha N-terminal domain (alpha-NTD) region spans residues 1–243; it reads MLIKQGDRLI…DQISVFINFD (243 aa). Residues 260–347 are alpha C-terminal domain (alpha-CTD); that stretch reads FNEHLFKSID…EWKRKQQHEA (88 aa).

The protein belongs to the RNA polymerase alpha chain family. In terms of assembly, homodimer. The RNAP catalytic core consists of 2 alpha, 1 beta, 1 beta' and 1 omega subunit. When a sigma factor is associated with the core the holoenzyme is formed, which can initiate transcription.

It carries out the reaction RNA(n) + a ribonucleoside 5'-triphosphate = RNA(n+1) + diphosphate. In terms of biological role, DNA-dependent RNA polymerase catalyzes the transcription of DNA into RNA using the four ribonucleoside triphosphates as substrates. In Nitratidesulfovibrio vulgaris (strain ATCC 29579 / DSM 644 / CCUG 34227 / NCIMB 8303 / VKM B-1760 / Hildenborough) (Desulfovibrio vulgaris), this protein is DNA-directed RNA polymerase subunit alpha.